Consider the following 116-residue polypeptide: UPF0342 protein lhv_1666 (116 aa).

This sequence belongs to the UPF0342 family.

The sequence is that of UPF0342 protein lhv_1666 from Lactobacillus helveticus (strain DPC 4571).